Here is a 233-residue protein sequence, read N- to C-terminus: Rano class II histocompatibility antigen, A beta chain (233 aa).

Positions 1–80 are beta-1; that stretch reads DFVYQFKGLC…DTVCRYNYEE (80 aa). Residues 1-194 are Extracellular-facing; the sequence is DFVYQFKGLC…RAQSESAQSK (194 aa). N-linked (GlcNAc...) asparagine glycosylation occurs at N14. The interval 81-184 is beta-2; it reads TEVPTSLRRL…SLESPVTVEW (104 aa). An Ig-like C1-type domain is found at 93-181; that stretch reads PNVAISLSRT…DHASLESPVT (89 aa). A connecting peptide region spans residues 185–194; sequence RAQSESAQSK. The helical transmembrane segment at 195–215 threads the bilayer; it reads MLSGIGGLVLGVIFLGLGLFI. At 216 to 233 the chain is on the cytoplasmic side; that stretch reads RHKRQKGPQGPPPAGLLQ.

It belongs to the MHC class II family.

It localises to the membrane. Functionally, involved in the presentation of foreign antigens to the immune system. This is Rano class II histocompatibility antigen, A beta chain (RT1-B) from Rattus norvegicus (Rat).